A 375-amino-acid chain; its full sequence is 23S rRNA (uracil(747)-C(5))-methyltransferase RlmC (375 aa).

The [4Fe-4S] cluster site is built by cysteine 3, cysteine 11, cysteine 14, and cysteine 87. S-adenosyl-L-methionine is bound by residues glutamine 212, phenylalanine 241, glutamate 262, and asparagine 307. Residue cysteine 334 is the Nucleophile of the active site.

It belongs to the class I-like SAM-binding methyltransferase superfamily. RNA M5U methyltransferase family. RlmC subfamily.

It carries out the reaction uridine(747) in 23S rRNA + S-adenosyl-L-methionine = 5-methyluridine(747) in 23S rRNA + S-adenosyl-L-homocysteine + H(+). Its function is as follows. Catalyzes the formation of 5-methyl-uridine at position 747 (m5U747) in 23S rRNA. This Salmonella typhi protein is 23S rRNA (uracil(747)-C(5))-methyltransferase RlmC.